We begin with the raw amino-acid sequence, 146 residues long: D-aminoacyl-tRNA deacylase (146 aa).

A Gly-cisPro motif, important for rejection of L-amino acids motif is present at residues 138–139 (GP).

It belongs to the DTD family. Homodimer.

The protein resides in the cytoplasm. The catalysed reaction is glycyl-tRNA(Ala) + H2O = tRNA(Ala) + glycine + H(+). It catalyses the reaction a D-aminoacyl-tRNA + H2O = a tRNA + a D-alpha-amino acid + H(+). An aminoacyl-tRNA editing enzyme that deacylates mischarged D-aminoacyl-tRNAs. Also deacylates mischarged glycyl-tRNA(Ala), protecting cells against glycine mischarging by AlaRS. Acts via tRNA-based rather than protein-based catalysis; rejects L-amino acids rather than detecting D-amino acids in the active site. By recycling D-aminoacyl-tRNA to D-amino acids and free tRNA molecules, this enzyme counteracts the toxicity associated with the formation of D-aminoacyl-tRNA entities in vivo and helps enforce protein L-homochirality. The chain is D-aminoacyl-tRNA deacylase from Xanthomonas campestris pv. campestris (strain 8004).